Reading from the N-terminus, the 471-residue chain is Tryptophanase (471 aa).

An N6-acetyllysine mark is found at K5, K115, and K156. Position 270 is an N6-(pyridoxal phosphate)lysine (K270). Residue K450 is modified to N6-acetyllysine.

The protein belongs to the beta-eliminating lyase family. As to quaternary structure, homotetramer. Requires pyridoxal 5'-phosphate as cofactor.

It catalyses the reaction L-tryptophan + H2O = indole + pyruvate + NH4(+). It participates in amino-acid degradation; L-tryptophan degradation via pyruvate pathway; indole and pyruvate from L-tryptophan: step 1/1. The chain is Tryptophanase (tnaA) from Escherichia coli O157:H7.